Here is a 46-residue protein sequence, read N- to C-terminus: Myoregulin (46 aa).

The Cytoplasmic segment spans residues 1–21 (MTGKNWILISTTTPKSLEDEI). The chain crosses the membrane as a helical span at residues 22–42 (VGRLLKILFVIFVDLISIIYV). The Lumenal segment spans residues 43–46 (VITS).

As to quaternary structure, homooligomer. Monomer. Interacts with ATP2A1/SERCA1. Interacts as a monomer with ATP2A2/SERCA2; the interaction inhibits ATP2A2 activity.

Its subcellular location is the sarcoplasmic reticulum membrane. Functionally, inhibits the activity of ATP2A1/SERCA1 ATPase in sarcoplasmic reticulum by decreasing the apparent affinity of the ATPase for Ca(2+), thereby acting as a key regulator of skeletal muscle activity. Its high expression in adult skeletal muscle, suggests that it constitutes the predominant regulator of ATP2A1/SERCA1 in adult skeletal muscle. Also inhibits the activity of ATP2A2/SERCA2 and ATP2A3/SERCA3. In Homo sapiens (Human), this protein is Myoregulin.